We begin with the raw amino-acid sequence, 703 residues long: DnaJ homolog subfamily C member 14 (703 aa).

Positions 1 to 11 (MAQKHPGERRL) are enriched in basic and acidic residues. The interval 1–229 (MAQKHPGERR…GRHRLARKRS (229 aa)) is disordered. The segment covering 17-28 (SGGTSLSTSGSS) has biased composition (low complexity). Positions 75–84 (HGPPRGPGPP) are enriched in pro residues. A compositionally biased stretch (acidic residues) spans 91–102 (DESETGSEESGV). The segment covering 121–133 (SFLSIPSACNCQG) has biased composition (polar residues). The span at 163-176 (GEDEELEEEYDDEE) shows a compositional bias: acidic residues. Positions 193-202 (PLSRRQKHRF) are enriched in basic residues. The segment covering 203-218 (LIKEDVRDSGRREPKA) has biased composition (basic and acidic residues). Positions 219–228 (PGRHRLARKR) are enriched in basic residues. The next 2 helical transmembrane spans lie at 305–325 (MMFQFLSQSFFCVVGLLIRIL) and 327–347 (VVGAFLLLALALFLGCLQLGW). Residues 444 to 508 (NPFHVLGVEA…ERRKEYEMKR (65 aa)) enclose the J domain. Disordered stretches follow at residues 622–643 (FGSRVPGTSGRQRATPESPPAD) and 659–703 (MSNG…PFQR). The span at 673–684 (GTTSTSRPNSSV) shows a compositional bias: polar residues. Positions 691–703 (PKRRKKVRRPFQR) are enriched in basic residues.

Interacts with the FxxxFxxxF motif of DRD1 via its C-terminal domain.

The protein resides in the endoplasmic reticulum membrane. In terms of biological role, regulates the export of target proteins, such as DRD1, from the endoplasmic reticulum to the cell surface. This Mus musculus (Mouse) protein is DnaJ homolog subfamily C member 14 (Dnajc14).